A 497-amino-acid chain; its full sequence is L-asparagine permease (497 aa).

Helical transmembrane passes span 34–54, 58–78, 109–129, 146–166, 171–191, 219–239, 264–284, 298–318, 353–373, 378–398, 422–442, and 448–468; these read QVQMIAIGGAIGTGLFLGAGA, MAGPALALVYLICGIFSFFIL, VAGWMYFINWAMTGIVDITAV, VFALGALTIVGTMNMIGVKWF, FWFALIKVLAIVIFLVVGTIF, LLPALVLIQGVVFAFASIELV, IGLFYVGSVVLLVLLLPWNAY, LGVPYIGSIMNIVVLTAALSS, YAGILATLVVYVVGVFLNYLV, FEIVLNFASLGIIASWAFIMV, APFTSWLTLLFLLSVLVLMAF, and TYTIASLPLIAILLVAGWFGV.

The protein belongs to the amino acid-polyamine-organocation (APC) superfamily. Amino acid transporter (AAT) (TC 2.A.3.1) family.

It localises to the cell inner membrane. The polypeptide is L-asparagine permease (ansP) (Salmonella typhimurium (strain LT2 / SGSC1412 / ATCC 700720)).